Here is a 300-residue protein sequence, read N- to C-terminus: Tyrosine recombinase XerC (300 aa).

Positions 2-88 (IQEGKLEQQF…SLRSFYTFLL (87 aa)) constitute a Core-binding (CB) domain. Residues 109–294 (RLPKFFYSEE…TKEHLKSTYM (186 aa)) form the Tyr recombinase domain. Active-site residues include R150, K174, H246, R249, and H272. Catalysis depends on Y281, which acts as the O-(3'-phospho-DNA)-tyrosine intermediate.

Belongs to the 'phage' integrase family. XerC subfamily. As to quaternary structure, forms a cyclic heterotetrameric complex composed of two molecules of XerC and two molecules of XerD.

The protein localises to the cytoplasm. Its function is as follows. Site-specific tyrosine recombinase, which acts by catalyzing the cutting and rejoining of the recombining DNA molecules. The XerC-XerD complex is essential to convert dimers of the bacterial chromosome into monomers to permit their segregation at cell division. It also contributes to the segregational stability of plasmids. The chain is Tyrosine recombinase XerC from Listeria monocytogenes serovar 1/2a (strain ATCC BAA-679 / EGD-e).